We begin with the raw amino-acid sequence, 261 residues long: Ribonuclease PH (261 aa).

Residues R88 and 126 to 128 (GTR) contribute to the phosphate site. Residues 242–261 (PYPGVLPEPKNPEPKKKFGA) are disordered. Positions 251-261 (KNPEPKKKFGA) are enriched in basic and acidic residues.

The protein belongs to the RNase PH family. Homohexameric ring arranged as a trimer of dimers.

It carries out the reaction tRNA(n+1) + phosphate = tRNA(n) + a ribonucleoside 5'-diphosphate. Phosphorolytic 3'-5' exoribonuclease that plays an important role in tRNA 3'-end maturation. Removes nucleotide residues following the 3'-CCA terminus of tRNAs; can also add nucleotides to the ends of RNA molecules by using nucleoside diphosphates as substrates, but this may not be physiologically important. Probably plays a role in initiation of 16S rRNA degradation (leading to ribosome degradation) during starvation. This chain is Ribonuclease PH, found in Rhodococcus erythropolis (strain PR4 / NBRC 100887).